The primary structure comprises 557 residues: MKRGYEVLRDPHLNKGMAFTLEERQQLNIHGLLPPCFLGQDVQVFSILKNFERLTSDLDRYILLMSLQDRNEKLFYKVLTSDIERFMPIVYTPTVGLACQQYGLAFRRPRGLFITIHDRGHIATMLKSWPESVIKAIVVTDGERILGLGDLGCYGMGIPVGKLALYTACGGVKPHECLPVMLDVGTDNEALLKDPLYIGLRHKRIRGQAYDDLLDEFMEAVTSRYGMNCLIQFEDFANANAFRLLHKYRNKYCTFNDDIQGTASVAVAGLLAALRITKNRLSDHTVLFQGAGEAALGIANLIVMAMEKEGVSKEAAVKRIWMVDSKGLIVKGRASLTAEKTRFAHEHAEMKNLEDIVKDIKPSVLIGVAAIGGAFTKEILQDMAAFNKRPIIFALSNPTSKAECTAEQCYKYTEGRGIFASGSPFDPVTLPNGKTLYPGQGNNSYVFPGVALGVIACGLKHIGEDVFLTTAEVIAEQVSEENLQEGRLYPPLVTIQHVSLKIAVRIAEEAYRNNTASTYPQPKDLEAFIQSQIYSTDYNSFVADSYTWPEEAMKVKL.

The active-site Proton donor is Tyr-91. Arg-144 lines the NADP(+) pocket. The active-site Proton acceptor is Lys-162. A divalent metal cation-binding residues include Glu-234, Asp-235, and Asp-258. Residues Asp-258, 290 to 307, and Asn-397 each bind NADP(+); that span reads GAGE…MAME.

This sequence belongs to the malic enzymes family. Homotetramer. Requires Mg(2+) as cofactor. The cofactor is Mn(2+).

It is found in the cytoplasm. It carries out the reaction (S)-malate + NADP(+) = pyruvate + CO2 + NADPH. The catalysed reaction is oxaloacetate + H(+) = pyruvate + CO2. The sequence is that of NADP-dependent malic enzyme (ME1) from Anas platyrhynchos (Mallard).